Here is a 274-residue protein sequence, read N- to C-terminus: Remorin 4.2 (274 aa).

Residues 1-30 (MLTLYHQERSPDATSNDRDETPETVVREVH) are compositionally biased toward basic and acidic residues. Disordered stretches follow at residues 1 to 71 (MLTL…EGEN), 117 to 157 (TDHE…TVQR), and 218 to 245 (AMEK…AKRG). Composition is skewed to polar residues over residues 61–71 (RSATTMSEGEN) and 145–156 (GPGQSRVGSTVQ). A coiled-coil region spans residues 204–239 (MKKIERKLEERKAKAMEKTQNNVAKAQRKAEERRAT). The segment covering 231–245 (RKAEERRATAEAKRG) has biased composition (basic and acidic residues).

Belongs to the remorin family. Forms homodimer and heterodimer with REM4.1. Interacts with KIN11. In terms of processing, probably ubiquitinated and degraded by the 26S proteasome pathway. Predominantly detected in bud, stem, root, flower, silique, and leaves, and enhanced dramatically in senescence leaf.

The protein resides in the cell membrane. Functionally, collaborates with REM4.1 to positively regulate the BCTV and BSCTV susceptibility. This chain is Remorin 4.2, found in Arabidopsis thaliana (Mouse-ear cress).